Consider the following 701-residue polypeptide: Elongation factor G 2 (701 aa).

The tr-type G domain maps to 8–291 (ERYRNIGISA…AVIDYLPSPA (284 aa)). GTP contacts are provided by residues 17-24 (AHIDAGKT), 88-92 (DTPGH), and 142-145 (NKMD).

The protein belongs to the TRAFAC class translation factor GTPase superfamily. Classic translation factor GTPase family. EF-G/EF-2 subfamily.

Its subcellular location is the cytoplasm. Its function is as follows. Catalyzes the GTP-dependent ribosomal translocation step during translation elongation. During this step, the ribosome changes from the pre-translocational (PRE) to the post-translocational (POST) state as the newly formed A-site-bound peptidyl-tRNA and P-site-bound deacylated tRNA move to the P and E sites, respectively. Catalyzes the coordinated movement of the two tRNA molecules, the mRNA and conformational changes in the ribosome. The polypeptide is Elongation factor G 2 (Burkholderia lata (strain ATCC 17760 / DSM 23089 / LMG 22485 / NCIMB 9086 / R18194 / 383)).